Here is a 669-residue protein sequence, read N- to C-terminus: DNA ligase (669 aa).

Residues aspartate 34–aspartate 38, serine 83–leucine 84, and glutamate 117 contribute to the NAD(+) site. Lysine 119 serves as the catalytic N6-AMP-lysine intermediate. Residues arginine 140, glutamate 177, lysine 293, and lysine 317 each coordinate NAD(+). Residues cysteine 411, cysteine 414, cysteine 429, and cysteine 434 each contribute to the Zn(2+) site. Residues arginine 591–glycine 669 enclose the BRCT domain.

This sequence belongs to the NAD-dependent DNA ligase family. LigA subfamily. It depends on Mg(2+) as a cofactor. The cofactor is Mn(2+).

The enzyme catalyses NAD(+) + (deoxyribonucleotide)n-3'-hydroxyl + 5'-phospho-(deoxyribonucleotide)m = (deoxyribonucleotide)n+m + AMP + beta-nicotinamide D-nucleotide.. Functionally, DNA ligase that catalyzes the formation of phosphodiester linkages between 5'-phosphoryl and 3'-hydroxyl groups in double-stranded DNA using NAD as a coenzyme and as the energy source for the reaction. It is essential for DNA replication and repair of damaged DNA. This Geotalea daltonii (strain DSM 22248 / JCM 15807 / FRC-32) (Geobacter daltonii) protein is DNA ligase.